A 379-amino-acid polypeptide reads, in one-letter code: UDP-4-amino-4-deoxy-L-arabinose--oxoglutarate aminotransferase (379 aa).

N6-(pyridoxal phosphate)lysine is present on Lys-182.

This sequence belongs to the DegT/DnrJ/EryC1 family. ArnB subfamily. In terms of assembly, homodimer. The cofactor is pyridoxal 5'-phosphate.

The enzyme catalyses UDP-4-amino-4-deoxy-beta-L-arabinose + 2-oxoglutarate = UDP-beta-L-threo-pentopyranos-4-ulose + L-glutamate. Its pathway is nucleotide-sugar biosynthesis; UDP-4-deoxy-4-formamido-beta-L-arabinose biosynthesis; UDP-4-deoxy-4-formamido-beta-L-arabinose from UDP-alpha-D-glucuronate: step 2/3. It functions in the pathway bacterial outer membrane biogenesis; lipopolysaccharide biosynthesis. Its function is as follows. Catalyzes the conversion of UDP-4-keto-arabinose (UDP-Ara4O) to UDP-4-amino-4-deoxy-L-arabinose (UDP-L-Ara4N). The modified arabinose is attached to lipid A and is required for resistance to polymyxin and cationic antimicrobial peptides. The sequence is that of UDP-4-amino-4-deoxy-L-arabinose--oxoglutarate aminotransferase from Escherichia coli O127:H6 (strain E2348/69 / EPEC).